Reading from the N-terminus, the 326-residue chain is Acetyl-coenzyme A carboxylase carboxyl transferase subunit beta (326 aa).

Positions 25–308 constitute a CoA carboxyltransferase N-terminal domain; sequence LWVKCPASGE…RRDDRSTLQL (284 aa). The segment at 298 to 326 is disordered; that stretch reads RRRDDRSTLQLTPPKTHAPKPPEPKVKPD. Residues 317–326 show a composition bias toward basic and acidic residues; the sequence is KPPEPKVKPD.

It belongs to the AccD/PCCB family. Acetyl-CoA carboxylase is a heterohexamer composed of biotin carboxyl carrier protein (AccB), biotin carboxylase (AccC) and two subunits each of ACCase subunit alpha (AccA) and ACCase subunit beta (AccD).

Its subcellular location is the cytoplasm. It catalyses the reaction N(6)-carboxybiotinyl-L-lysyl-[protein] + acetyl-CoA = N(6)-biotinyl-L-lysyl-[protein] + malonyl-CoA. It participates in lipid metabolism; malonyl-CoA biosynthesis; malonyl-CoA from acetyl-CoA: step 1/1. Functionally, component of the acetyl coenzyme A carboxylase (ACC) complex. Biotin carboxylase (BC) catalyzes the carboxylation of biotin on its carrier protein (BCCP) and then the CO(2) group is transferred by the transcarboxylase to acetyl-CoA to form malonyl-CoA. In Hyphomonas neptunium (strain ATCC 15444), this protein is Acetyl-coenzyme A carboxylase carboxyl transferase subunit beta.